Consider the following 826-residue polypeptide: Hyaluronate lyase HylA (826 aa).

The segment at residues 1–36 (MFDIPYQVPSRRTFLSLSALSAIAIAASPEMPDAFA) is a signal peptide (tat-type signal). Catalysis depends on residues His-276, Tyr-285, and Arg-339. The interval 800 to 826 (LSPALPKPTKPSLRASSYPLGLPHTSS) is disordered.

It belongs to the polysaccharide lyase 8 family. In terms of processing, predicted to be exported by the Tat system. The position of the signal peptide cleavage has not been experimentally proven.

The protein resides in the secreted. It carries out the reaction [hyaluronan](n) = n 3-(4-deoxy-beta-D-gluc-4-enuronosyl)-N-acetyl-D-glucosamine + H2O. Functionally, degrades hyaluronic acid (HA) into large-sized HA oligosaccharides, including tetrasaccharide HA (HA-4), hexasaccharide HA (HA-6) and higher molecular weight HA, and to a lesser extent into HA disaccharides (HA-2). Involved in the pathogenesis of acne. HA degradation products induce secretion of proinflammatory cytokines (IL-6, IL-8 and TNF-alpha) from human HaCaT keratinocyte cell line and from mouse bone marrow derived macrophages (BMDMs). Produced HA fragments also direct robust TLR2-dependent inflammation in the mouse model of acne. This chain is Hyaluronate lyase HylA, found in Cutibacterium acnes (Propionibacterium acnes).